We begin with the raw amino-acid sequence, 135 residues long: Small ribosomal subunit protein uS12 (135 aa).

Asp-89 carries the post-translational modification 3-methylthioaspartic acid. The disordered stretch occupies residues 114–135 (RSRYGAKKGAAKQAAAAKSKKK). Positions 124–135 (AKQAAAAKSKKK) are enriched in low complexity.

It belongs to the universal ribosomal protein uS12 family. Part of the 30S ribosomal subunit. Contacts proteins S8 and S17. May interact with IF1 in the 30S initiation complex.

With S4 and S5 plays an important role in translational accuracy. Its function is as follows. Interacts with and stabilizes bases of the 16S rRNA that are involved in tRNA selection in the A site and with the mRNA backbone. Located at the interface of the 30S and 50S subunits, it traverses the body of the 30S subunit contacting proteins on the other side and probably holding the rRNA structure together. The combined cluster of proteins S8, S12 and S17 appears to hold together the shoulder and platform of the 30S subunit. This is Small ribosomal subunit protein uS12 from Amoebophilus asiaticus (strain 5a2).